The following is a 316-amino-acid chain: Ribosomal RNA small subunit methyltransferase H (316 aa).

Residues 35 to 37, Asp55, Phe84, Asp105, and Gln112 each bind S-adenosyl-L-methionine; that span reads SGH.

It belongs to the methyltransferase superfamily. RsmH family.

It is found in the cytoplasm. The enzyme catalyses cytidine(1402) in 16S rRNA + S-adenosyl-L-methionine = N(4)-methylcytidine(1402) in 16S rRNA + S-adenosyl-L-homocysteine + H(+). Its function is as follows. Specifically methylates the N4 position of cytidine in position 1402 (C1402) of 16S rRNA. The chain is Ribosomal RNA small subunit methyltransferase H from Streptococcus pyogenes serotype M18 (strain MGAS8232).